The following is a 217-amino-acid chain: Peptidyl-tRNA hydrolase (217 aa).

Position 14 (Tyr14) interacts with tRNA. His19 (proton acceptor) is an active-site residue. The tRNA site is built by Tyr64, Asn66, and Asn113. The disordered stretch occupies residues 182–217 (MNRINAPPPKPKREQKRSSDAPDSSSDTNTSNASDG). A compositionally biased stretch (low complexity) spans 202–217 (APDSSSDTNTSNASDG).

It belongs to the PTH family. Monomer.

It is found in the cytoplasm. The catalysed reaction is an N-acyl-L-alpha-aminoacyl-tRNA + H2O = an N-acyl-L-amino acid + a tRNA + H(+). In terms of biological role, hydrolyzes ribosome-free peptidyl-tRNAs (with 1 or more amino acids incorporated), which drop off the ribosome during protein synthesis, or as a result of ribosome stalling. Catalyzes the release of premature peptidyl moieties from peptidyl-tRNA molecules trapped in stalled 50S ribosomal subunits, and thus maintains levels of free tRNAs and 50S ribosomes. The protein is Peptidyl-tRNA hydrolase of Roseiflexus sp. (strain RS-1).